Reading from the N-terminus, the 65-residue chain is Large ribosomal subunit protein uL29 (65 aa).

It belongs to the universal ribosomal protein uL29 family.

The polypeptide is Large ribosomal subunit protein uL29 (Paracidovorax citrulli (strain AAC00-1) (Acidovorax citrulli)).